A 575-amino-acid chain; its full sequence is Dihydroxy-acid dehydratase (575 aa).

Residues 1 to 27 (MSNQERQERPEKDPDLRSTEVTEGYEK) form a disordered region. Cys-61 lines the [2Fe-2S] cluster pocket. Residue Asp-93 participates in Mg(2+) binding. Position 134 (Cys-134) interacts with [2Fe-2S] cluster. Mg(2+) is bound by residues Asp-135 and Lys-136. Lys-136 is modified (N6-carboxylysine). Cys-206 is a [2Fe-2S] cluster binding site. Residue Glu-460 participates in Mg(2+) binding. Ser-486 acts as the Proton acceptor in catalysis.

The protein belongs to the IlvD/Edd family. Homodimer. Requires [2Fe-2S] cluster as cofactor. It depends on Mg(2+) as a cofactor.

It carries out the reaction (2R)-2,3-dihydroxy-3-methylbutanoate = 3-methyl-2-oxobutanoate + H2O. It catalyses the reaction (2R,3R)-2,3-dihydroxy-3-methylpentanoate = (S)-3-methyl-2-oxopentanoate + H2O. The protein operates within amino-acid biosynthesis; L-isoleucine biosynthesis; L-isoleucine from 2-oxobutanoate: step 3/4. Its pathway is amino-acid biosynthesis; L-valine biosynthesis; L-valine from pyruvate: step 3/4. In terms of biological role, functions in the biosynthesis of branched-chain amino acids. Catalyzes the dehydration of (2R,3R)-2,3-dihydroxy-3-methylpentanoate (2,3-dihydroxy-3-methylvalerate) into 2-oxo-3-methylpentanoate (2-oxo-3-methylvalerate) and of (2R)-2,3-dihydroxy-3-methylbutanoate (2,3-dihydroxyisovalerate) into 2-oxo-3-methylbutanoate (2-oxoisovalerate), the penultimate precursor to L-isoleucine and L-valine, respectively. The sequence is that of Dihydroxy-acid dehydratase from Haloarcula marismortui (strain ATCC 43049 / DSM 3752 / JCM 8966 / VKM B-1809) (Halobacterium marismortui).